We begin with the raw amino-acid sequence, 560 residues long: Oxygen-dependent choline dehydrogenase (560 aa).

Position 8-37 (Asp8–Glu37) interacts with FAD. His475 serves as the catalytic Proton acceptor.

This sequence belongs to the GMC oxidoreductase family. FAD serves as cofactor.

It carries out the reaction choline + A = betaine aldehyde + AH2. The catalysed reaction is betaine aldehyde + NAD(+) + H2O = glycine betaine + NADH + 2 H(+). It functions in the pathway amine and polyamine biosynthesis; betaine biosynthesis via choline pathway; betaine aldehyde from choline (cytochrome c reductase route): step 1/1. Involved in the biosynthesis of the osmoprotectant glycine betaine. Catalyzes the oxidation of choline to betaine aldehyde and betaine aldehyde to glycine betaine at the same rate. This Stenotrophomonas maltophilia (strain K279a) protein is Oxygen-dependent choline dehydrogenase.